The chain runs to 132 residues: uncharacterized protein (132 aa).

The signal sequence occupies residues 1–17 (MCPECFFLMLFFCGYRA). Residues 25-39 (SSSSSSSSSSSFRSS) are compositionally biased toward low complexity. The tract at residues 25–79 (SSSSSSSSSSSFRSSPAYGFSGRPPGGAGCRERSQRSCLRPGGLPSLTRNPGLQR) is disordered.

This is an uncharacterized protein from Escherichia coli (strain K12).